A 375-amino-acid polypeptide reads, in one-letter code: Serpin B5 (375 aa).

N99, N133, N155, N188, and N361 each carry an N-linked (GlcNAc...) asparagine glycan.

This sequence belongs to the serpin family. Ov-serpin subfamily. As to quaternary structure, interacts with IRF6.

The protein resides in the secreted. It is found in the extracellular space. Functionally, tumor suppressor. It blocks the growth, invasion, and metastatic properties of mammary tumors. As it does not undergo the S (stressed) to R (relaxed) conformational transition characteristic of active serpins, it exhibits no serine protease inhibitory activity. This chain is Serpin B5 (SERPINB5), found in Plecturocebus moloch (Dusky titi monkey).